The following is a 119-amino-acid chain: DNA-binding protein TubR (119 aa).

In terms of assembly, homodimer. Binds to TubZ filaments via the C-terminus of TubZ. DNA is not required for binding to TubZ.

A DNA-binding protein that is part of the type III plasmid partition system used to ensure correct segregation of the pBc10987 plasmid. Binds TubZ filaments but does not influence the GTPase activity of TubZ with or without DNA. Cooperatively binds to multiple regions in tubC (centromere-like site) upstream of its own gene with consensus sequence N(T/A)ATTNC(C/G)GNAAT(A/T)N; probably forms an extended DNA-protein filament. Binds sites in its own promoter region and presumably represses its expression; its effect on RNA expression has not been shown. Does not specifically bind to the putative origin of replication on pBc10987. In Bacillus cereus (strain ATCC 10987 / NRS 248), this protein is DNA-binding protein TubR.